A 493-amino-acid chain; its full sequence is Glutamyl-tRNA(Gln) amidotransferase subunit A (493 aa).

Active-site charge relay system residues include K79 and S159. The active-site Acyl-ester intermediate is S183.

It belongs to the amidase family. GatA subfamily. As to quaternary structure, heterotrimer of A, B and C subunits.

The catalysed reaction is L-glutamyl-tRNA(Gln) + L-glutamine + ATP + H2O = L-glutaminyl-tRNA(Gln) + L-glutamate + ADP + phosphate + H(+). Its function is as follows. Allows the formation of correctly charged Gln-tRNA(Gln) through the transamidation of misacylated Glu-tRNA(Gln) in organisms which lack glutaminyl-tRNA synthetase. The reaction takes place in the presence of glutamine and ATP through an activated gamma-phospho-Glu-tRNA(Gln). The protein is Glutamyl-tRNA(Gln) amidotransferase subunit A of Brucella melitensis biotype 2 (strain ATCC 23457).